A 479-amino-acid polypeptide reads, in one-letter code: GTPase Der (479 aa).

EngA-type G domains follow at residues 3 to 166 (PVVA…AEEY) and 192 to 365 (LKLA…ASAT). Residues 9-16 (GRPNVGKS), 56-60 (DTGGI), 118-121 (NKID), 198-205 (GRPNVGKS), 245-249 (DTAGV), and 310-313 (NKWD) contribute to the GTP site. The KH-like domain maps to 366-450 (QRISTSKLTK…PIKVEFREPV (85 aa)).

The protein belongs to the TRAFAC class TrmE-Era-EngA-EngB-Septin-like GTPase superfamily. EngA (Der) GTPase family. As to quaternary structure, associates with the 50S ribosomal subunit.

GTPase that plays an essential role in the late steps of ribosome biogenesis. This is GTPase Der from Idiomarina loihiensis (strain ATCC BAA-735 / DSM 15497 / L2-TR).